The primary structure comprises 320 residues: Adhesin MafA 3 (320 aa).

The first 18 residues, 1–18 (MQARLLIPILFSVFILSA), serve as a signal peptide directing secretion. The N-palmitoyl cysteine moiety is linked to residue cysteine 19. Cysteine 19 is lipidated: S-diacylglycerol cysteine. Positions 288–298 (HTGNSAPSVET) are enriched in polar residues. The tract at residues 288–320 (HTGNSAPSVETDNSHEGYGYSDEVVRQHRQGQP) is disordered.

This sequence belongs to the MafA family.

Its subcellular location is the cell outer membrane. This Neisseria meningitidis serogroup C / serotype 2a (strain ATCC 700532 / DSM 15464 / FAM18) protein is Adhesin MafA 3 (mafA3).